We begin with the raw amino-acid sequence, 160 residues long: Large ribosomal subunit protein uL15 (160 aa).

Residues 1–11 (MKLNELRDNHG) are compositionally biased toward basic and acidic residues. A disordered region spans residues 1 to 39 (MKLNELRDNHGARPKSKRLGRGIGSGKGKTSGKGVKGQK). Residues 21-35 (RGIGSGKGKTSGKGV) show a composition bias toward gly residues.

Belongs to the universal ribosomal protein uL15 family. Part of the 50S ribosomal subunit.

Binds to the 23S rRNA. This is Large ribosomal subunit protein uL15 from Granulibacter bethesdensis (strain ATCC BAA-1260 / CGDNIH1).